The primary structure comprises 178 residues: Acireductone dioxygenase (178 aa).

Residues His-100, His-102, Glu-106, and His-145 each coordinate Fe(2+). 4 residues coordinate Ni(2+): His-100, His-102, Glu-106, and His-145.

Belongs to the acireductone dioxygenase (ARD) family. As to quaternary structure, monomer. The cofactor is Fe(2+). Ni(2+) serves as cofactor.

The enzyme catalyses 1,2-dihydroxy-5-(methylsulfanyl)pent-1-en-3-one + O2 = 3-(methylsulfanyl)propanoate + CO + formate + 2 H(+). It carries out the reaction 1,2-dihydroxy-5-(methylsulfanyl)pent-1-en-3-one + O2 = 4-methylsulfanyl-2-oxobutanoate + formate + 2 H(+). It functions in the pathway amino-acid biosynthesis; L-methionine biosynthesis via salvage pathway; L-methionine from S-methyl-5-thio-alpha-D-ribose 1-phosphate: step 5/6. Functionally, catalyzes 2 different reactions between oxygen and the acireductone 1,2-dihydroxy-3-keto-5-methylthiopentene (DHK-MTPene) depending upon the metal bound in the active site. Fe-containing acireductone dioxygenase (Fe-ARD) produces formate and 2-keto-4-methylthiobutyrate (KMTB), the alpha-ketoacid precursor of methionine in the methionine recycle pathway. Ni-containing acireductone dioxygenase (Ni-ARD) produces methylthiopropionate, carbon monoxide and formate, and does not lie on the methionine recycle pathway. The protein is Acireductone dioxygenase of Bacillus velezensis (strain DSM 23117 / BGSC 10A6 / LMG 26770 / FZB42) (Bacillus amyloliquefaciens subsp. plantarum).